The chain runs to 290 residues: Bifunctional protein FolD (290 aa).

Residues 167-169, Ser192, and Ile233 each bind NADP(+); that span reads GRS.

Belongs to the tetrahydrofolate dehydrogenase/cyclohydrolase family. As to quaternary structure, homodimer.

The catalysed reaction is (6R)-5,10-methylene-5,6,7,8-tetrahydrofolate + NADP(+) = (6R)-5,10-methenyltetrahydrofolate + NADPH. The enzyme catalyses (6R)-5,10-methenyltetrahydrofolate + H2O = (6R)-10-formyltetrahydrofolate + H(+). It participates in one-carbon metabolism; tetrahydrofolate interconversion. Catalyzes the oxidation of 5,10-methylenetetrahydrofolate to 5,10-methenyltetrahydrofolate and then the hydrolysis of 5,10-methenyltetrahydrofolate to 10-formyltetrahydrofolate. This Azorhizobium caulinodans (strain ATCC 43989 / DSM 5975 / JCM 20966 / LMG 6465 / NBRC 14845 / NCIMB 13405 / ORS 571) protein is Bifunctional protein FolD.